A 943-amino-acid chain; its full sequence is Aconitate hydratase A (943 aa).

[4Fe-4S] cluster-binding residues include C479, C545, and C548.

Belongs to the aconitase/IPM isomerase family. In terms of assembly, monomer. [4Fe-4S] cluster is required as a cofactor.

It carries out the reaction citrate = D-threo-isocitrate. It catalyses the reaction (2S,3R)-3-hydroxybutane-1,2,3-tricarboxylate = 2-methyl-cis-aconitate + H2O. The protein operates within carbohydrate metabolism; tricarboxylic acid cycle; isocitrate from oxaloacetate: step 2/2. Its pathway is organic acid metabolism; propanoate degradation. Involved in the catabolism of short chain fatty acids (SCFA) via the tricarboxylic acid (TCA)(acetyl degradation route) and probably via the 2-methylcitrate cycle I (propionate degradation route). Catalyzes the reversible isomerization of citrate to isocitrate via cis-aconitate. The apo form of AcnA functions as a RNA-binding regulatory protein which binds to selected IRE-like sequences present within the UTRs (untranslated regions) of 3' trxC and 5' IdeR mRNA. Could catalyze the hydration of 2-methyl-cis-aconitate to yield (2R,3S)-2-methylisocitrate. This is Aconitate hydratase A (acn) from Mycobacterium tuberculosis (strain ATCC 25618 / H37Rv).